We begin with the raw amino-acid sequence, 388 residues long: Pyruvate dehydrogenase E1 component subunit alpha, testis-specific form, mitochondrial (388 aa).

A mitochondrion-targeting transit peptide spans 1-27; that stretch reads MLAAFISRVLRRVAQKSARRVLVASRN. 10 residues coordinate pyruvate: histidine 90, tyrosine 116, arginine 117, glycine 163, valine 165, aspartate 194, glycine 195, alanine 196, asparagine 223, and tyrosine 225. Thiamine diphosphate contacts are provided by tyrosine 116, arginine 117, glycine 163, valine 165, aspartate 194, glycine 195, alanine 196, and asparagine 223. Residue aspartate 194 coordinates Mg(2+). Mg(2+) is bound by residues asparagine 223 and tyrosine 225. Histidine 290 lines the thiamine diphosphate pocket. At serine 291 the chain carries Phosphoserine; by PDK1, PDK2, PDK3 and PDK4. A Phosphoserine modification is found at serine 293. At serine 298 the chain carries Phosphoserine; by PDK3.

As to quaternary structure, heterotetramer of two PDHA2 and two PDHB subunits. The heterotetramer interacts with DLAT, and is part of the multimeric pyruvate dehydrogenase complex that contains multiple copies of pyruvate dehydrogenase (E1), dihydrolipoamide acetyltransferase (DLAT, E2) and lipoamide dehydrogenase (DLD, E3). These subunits are bound to an inner core composed of about 48 DLAT and 12 PDHX molecules. Thiamine diphosphate serves as cofactor. Requires Mg(2+) as cofactor. In terms of processing, phosphorylation at Ser-291, Ser-293 and Ser-298 by PDK family kinases inactivates the enzyme; for this phosphorylation at a single site is sufficient. Phosphorylation at Ser-293 interferes with access to active site, and thereby inactivates the enzyme. Dephosphorylation at all three sites, i.e. at Ser-291, Ser-293 and Ser-298, is required for reactivation. In terms of tissue distribution, testis. Expressed in postmeiotic spermatogenic cells.

The protein localises to the mitochondrion matrix. It catalyses the reaction N(6)-[(R)-lipoyl]-L-lysyl-[protein] + pyruvate + H(+) = N(6)-[(R)-S(8)-acetyldihydrolipoyl]-L-lysyl-[protein] + CO2. With respect to regulation, pyruvate dehydrogenase activity is inhibited by phosphorylation of PDHA2; it is reactivated by dephosphorylation. In terms of biological role, the pyruvate dehydrogenase complex catalyzes the overall conversion of pyruvate to acetyl-CoA and CO(2), and thereby links the glycolytic pathway to the tricarboxylic cycle. The polypeptide is Pyruvate dehydrogenase E1 component subunit alpha, testis-specific form, mitochondrial (PDHA2) (Homo sapiens (Human)).